Reading from the N-terminus, the 194-residue chain is Peptidyl-tRNA hydrolase (194 aa).

Y17 is a binding site for tRNA. H22 (proton acceptor) is an active-site residue. 3 residues coordinate tRNA: F68, N70, and N116.

Belongs to the PTH family. As to quaternary structure, monomer.

The protein localises to the cytoplasm. The enzyme catalyses an N-acyl-L-alpha-aminoacyl-tRNA + H2O = an N-acyl-L-amino acid + a tRNA + H(+). Functionally, hydrolyzes ribosome-free peptidyl-tRNAs (with 1 or more amino acids incorporated), which drop off the ribosome during protein synthesis, or as a result of ribosome stalling. Its function is as follows. Catalyzes the release of premature peptidyl moieties from peptidyl-tRNA molecules trapped in stalled 50S ribosomal subunits, and thus maintains levels of free tRNAs and 50S ribosomes. The sequence is that of Peptidyl-tRNA hydrolase from Haemophilus influenzae (strain 86-028NP).